The sequence spans 103 residues: Large ribosomal subunit protein eL14 (103 aa).

This sequence belongs to the eukaryotic ribosomal protein eL14 family.

The chain is Large ribosomal subunit protein eL14 from Pyrobaculum neutrophilum (strain DSM 2338 / JCM 9278 / NBRC 100436 / V24Sta) (Thermoproteus neutrophilus).